We begin with the raw amino-acid sequence, 254 residues long: Aspartate/glutamate leucyltransferase (254 aa).

The protein belongs to the R-transferase family. Bpt subfamily.

The protein resides in the cytoplasm. The catalysed reaction is N-terminal L-glutamyl-[protein] + L-leucyl-tRNA(Leu) = N-terminal L-leucyl-L-glutamyl-[protein] + tRNA(Leu) + H(+). It carries out the reaction N-terminal L-aspartyl-[protein] + L-leucyl-tRNA(Leu) = N-terminal L-leucyl-L-aspartyl-[protein] + tRNA(Leu) + H(+). Functions in the N-end rule pathway of protein degradation where it conjugates Leu from its aminoacyl-tRNA to the N-termini of proteins containing an N-terminal aspartate or glutamate. The chain is Aspartate/glutamate leucyltransferase from Xylella fastidiosa (strain 9a5c).